We begin with the raw amino-acid sequence, 345 residues long: MYKDCIESTGDYFLLCDAEGPWGIILESLAILGIVVTILLLLAFLFLMRKIQDCSQWNVLPTQLLFLLSVLGLFGLAFAFIIELNQQTAPVRYFLFGVLFALCFSCLLAHASNLVKLVRGCVSFSWTTILCIAIGCSLLQIIIATEYVTLIMTRGMMFVNMTPCQLNVDFVVLLVYVLFLMALTFFVSKATFCGPCENWKQHGRLIFITVLFSIIIWVVWISMLLRGNPQFQRQPQWDDPVVCIALVTNAWVFLLLYIVPELCILYRSCRQECPLQGNACPVTAYQHSFQVENQELSRARDSDGAEEDVALTSYGTPIQPQTVDPTQECFIPQAKLSPQQDAGGV.

Over 1–27 (MYKDCIESTGDYFLLCDAEGPWGIILE) the chain is Extracellular. Residues 28–48 (SLAILGIVVTILLLLAFLFLM) traverse the membrane as a helical segment. Residues 49 to 63 (RKIQDCSQWNVLPTQ) are Cytoplasmic-facing. A helical transmembrane segment spans residues 64–84 (LLFLLSVLGLFGLAFAFIIEL). The Extracellular segment spans residues 85-93 (NQQTAPVRY). A helical transmembrane segment spans residues 94–114 (FLFGVLFALCFSCLLAHASNL). At 115–123 (VKLVRGCVS) the chain is on the cytoplasmic side. Residues 124–144 (FSWTTILCIAIGCSLLQIIIA) form a helical membrane-spanning segment. Over 145–167 (TEYVTLIMTRGMMFVNMTPCQLN) the chain is Extracellular. A helical membrane pass occupies residues 168-188 (VDFVVLLVYVLFLMALTFFVS). Over 189–204 (KATFCGPCENWKQHGR) the chain is Cytoplasmic. Residues 205-225 (LIFITVLFSIIIWVVWISMLL) form a helical membrane-spanning segment. Residues 226 to 239 (RGNPQFQRQPQWDD) lie on the Extracellular side of the membrane. Residues 240–260 (PVVCIALVTNAWVFLLLYIVP) traverse the membrane as a helical segment. At 261 to 345 (ELCILYRSCR…LSPQQDAGGV (85 aa)) the chain is on the cytoplasmic side.

This sequence belongs to the G-protein coupled receptor 3 family. As to quaternary structure, homodimer. As to expression, widely expressed in the peripheral system. Expression pattern is high in pancreas, medium in kidney, small intestine, spleen and testis, low in lung, colon, leukocyte, prostate and thymus and not detectable in brain, heart, liver, placenta, skeletal muscle and ovary.

The protein resides in the cell membrane. Its function is as follows. G-protein coupled receptor involved in hard keratin expression and likely plays a role in the development of hair and nails. The chain is G-protein coupled receptor family C group 5 member D (GPRC5D) from Homo sapiens (Human).